The following is a 427-amino-acid chain: 3-phosphoshikimate 1-carboxyvinyltransferase (427 aa).

The 3-phosphoshikimate site is built by Lys-22, Ser-23, and Arg-27. Lys-22 lines the phosphoenolpyruvate pocket. Phosphoenolpyruvate contacts are provided by Gly-96 and Arg-124. 3-phosphoshikimate-binding residues include Ser-169, Ser-170, Gln-171, Ser-197, Asp-313, Asn-336, and Lys-340. Gln-171 contacts phosphoenolpyruvate. Asp-313 acts as the Proton acceptor in catalysis. Phosphoenolpyruvate-binding residues include Arg-344, Arg-386, and Lys-411.

This sequence belongs to the EPSP synthase family. As to quaternary structure, monomer.

The protein localises to the cytoplasm. The catalysed reaction is 3-phosphoshikimate + phosphoenolpyruvate = 5-O-(1-carboxyvinyl)-3-phosphoshikimate + phosphate. It functions in the pathway metabolic intermediate biosynthesis; chorismate biosynthesis; chorismate from D-erythrose 4-phosphate and phosphoenolpyruvate: step 6/7. Catalyzes the transfer of the enolpyruvyl moiety of phosphoenolpyruvate (PEP) to the 5-hydroxyl of shikimate-3-phosphate (S3P) to produce enolpyruvyl shikimate-3-phosphate and inorganic phosphate. This Escherichia coli O127:H6 (strain E2348/69 / EPEC) protein is 3-phosphoshikimate 1-carboxyvinyltransferase.